The chain runs to 257 residues: MPVLSKLLPTLTLTLPLLAGPCLAAANPKLSKRFTFPIPSSTGSVTFSEPYEIAAGEIYDGELQTFGRGVECTGQDEGGESDTVFIVQEGGTLKNAIIGADQIEGVYCLGACTIENVWWEKVCEDALSLKEGSGPYVVTGGGAQGAEDKVIQHNSEGEVIVDGFTVYDFGKLYRSCGTCGDIQRSATITNVVAVSGSTIAGANGNFGDVVTIDSSNCATDVSAICTTYEADADGGEPEEVSTDVTEACVFEELPACE.

An N-terminal signal peptide occupies residues 1-24; the sequence is MPVLSKLLPTLTLTLPLLAGPCLA.

The protein belongs to the polysaccharide lyase 3 family. It depends on Ca(2+) as a cofactor.

The protein localises to the secreted. It catalyses the reaction Eliminative cleavage of (1-&gt;4)-alpha-D-galacturonan to give oligosaccharides with 4-deoxy-alpha-D-galact-4-enuronosyl groups at their non-reducing ends.. Pectinolytic enzyme consist of four classes of enzymes: pectin lyase, polygalacturonase, pectin methylesterase and rhamnogalacturonase. Among pectinolytic enzymes, pectin lyase is the most important in depolymerization of pectin, since it cleaves internal glycosidic bonds of highly methylated pectins. Favors pectate, the anion, over pectin, the methyl ester. This Emericella nidulans (strain FGSC A4 / ATCC 38163 / CBS 112.46 / NRRL 194 / M139) (Aspergillus nidulans) protein is Probable pectate lyase G (plyG).